A 271-amino-acid chain; its full sequence is Tryptophan synthase alpha chain (271 aa).

Catalysis depends on proton acceptor residues glutamate 49 and aspartate 60.

This sequence belongs to the TrpA family. As to quaternary structure, tetramer of two alpha and two beta chains.

The enzyme catalyses (1S,2R)-1-C-(indol-3-yl)glycerol 3-phosphate + L-serine = D-glyceraldehyde 3-phosphate + L-tryptophan + H2O. Its pathway is amino-acid biosynthesis; L-tryptophan biosynthesis; L-tryptophan from chorismate: step 5/5. Its function is as follows. The alpha subunit is responsible for the aldol cleavage of indoleglycerol phosphate to indole and glyceraldehyde 3-phosphate. The polypeptide is Tryptophan synthase alpha chain (Leptothrix cholodnii (strain ATCC 51168 / LMG 8142 / SP-6) (Leptothrix discophora (strain SP-6))).